The sequence spans 198 residues: HTH-type transcriptional repressor DhaR (198 aa).

The region spanning threonine 4–leucine 64 is the HTH tetR-type domain.

Transcriptional repressor for the dhaA haloalkane dehalogenase gene. The sequence is that of HTH-type transcriptional repressor DhaR (dhaR) from Mycobacterium sp. (strain GP1).